Reading from the N-terminus, the 272-residue chain is Glucosyl-3-phosphoglycerate/mannosyl-3-phosphoglycerate phosphatase (272 aa).

Residue D8 is the Nucleophile of the active site. D8, D10, and D214 together coordinate Mg(2+).

This sequence belongs to the HAD-like hydrolase superfamily. MPGP family. As to quaternary structure, monomer. Co(2+) serves as cofactor. Mg(2+) is required as a cofactor. It depends on Ni(2+) as a cofactor.

The enzyme catalyses (2R)-2-O-(alpha-D-glucopyranosyl)-3-phospho-glycerate + H2O = (2R)-2-O-(alpha-D-glucopyranosyl)-glycerate + phosphate. It catalyses the reaction 2-O-(alpha-D-mannosyl)-3-phosphoglycerate + H2O = (2R)-2-O-(alpha-D-mannosyl)-glycerate + phosphate. Its function is as follows. Involved in the biosynthesis of glucosylglycerate. Catalyzes the dephosphorylation of glucosyl-3-phosphoglycerate (GPG) and mannosyl-3-phosphoglycerate (MPG) to glucosylglycerate (GG) and mannosylglycerate (MG), respectively. The polypeptide is Glucosyl-3-phosphoglycerate/mannosyl-3-phosphoglycerate phosphatase (Methanococcoides burtonii (strain DSM 6242 / NBRC 107633 / OCM 468 / ACE-M)).